The following is a 92-amino-acid chain: Cell division protein FtsB (92 aa).

The Cytoplasmic portion of the chain corresponds to 1-3; it reads MRF. The helical transmembrane segment at 4–21 threads the bilayer; that stretch reads FQVGLLCLALFVQYRLWF. The Periplasmic segment spans residues 22 to 92; the sequence is GHNGVQDYTR…TFIRVLPAQQ (71 aa). Residues 40–73 are a coiled coil; sequence LQTNEKLIKRNKVLTADIEDLKLGHEGIEERARN.

This sequence belongs to the FtsB family. In terms of assembly, part of a complex composed of FtsB, FtsL and FtsQ.

The protein localises to the cell inner membrane. Its function is as follows. Essential cell division protein. May link together the upstream cell division proteins, which are predominantly cytoplasmic, with the downstream cell division proteins, which are predominantly periplasmic. This is Cell division protein FtsB from Pseudoalteromonas translucida (strain TAC 125).